The chain runs to 275 residues: Lectin (275 aa).

An N-terminal signal peptide occupies residues 1 to 30 (MASLQTQMISFYLIFLSILLTTIFFFKVNS). D-glucose-binding residues include Asp-111 and Gly-129. The Mn(2+) site is built by Glu-149 and Asp-151. Asp-151, Phe-153, Asn-155, and Asp-159 together coordinate Ca(2+). The Mn(2+) site is built by Asp-159 and His-166. The propeptide occupies 211–217 (NSLEEEN). D-glucose-binding residues include Gly-246 and Ala-247. Residues 270–275 (KQAADA) constitute a propeptide that is removed on maturation.

Belongs to the leguminous lectin family. Heterotetramer of two alpha and two beta chains. In terms of processing, the mature form consists of two chains, alpha and beta, produced by cleavage of the immature protein. These remain cleaved, yet fold together to form one subunit.

Its function is as follows. D-mannose specific lectin. The protein is Lectin of Lens culinaris subsp. orientalis (Oriental wild lentil).